The following is a 273-amino-acid chain: MAVVKCKPTSPGRRHVVKVVNPELHKGKPFAPLVEKNSKSGGRNNNGRITTRHIGGGHKQAYRIVDFKRNKDGIPAVVERLEYDPNRSANIALVLYKDGERRYILAPKGLKAGDQIQSGVDAAIKAGNTLPMRNIPVGSTVHNVEMKPGKGGQLARSAGTYVQIVARDGAYVTLRLRSGEMRKVEADCRATLGEVGNAEHMLRVLGKAGAARWRGVRPTVRGTAMNPVDHPHGGGEGRNFGKHPVTPWGVQTKGKKTRSNKRTDKFIVRRRSK.

Disordered regions lie at residues 28–53 (KPFAPLVEKNSKSGGRNNNGRITTRH) and 221–273 (RGTA…RRSK). Over residues 39–48 (KSGGRNNNGR) the composition is skewed to low complexity.

Belongs to the universal ribosomal protein uL2 family. As to quaternary structure, part of the 50S ribosomal subunit. Forms a bridge to the 30S subunit in the 70S ribosome.

In terms of biological role, one of the primary rRNA binding proteins. Required for association of the 30S and 50S subunits to form the 70S ribosome, for tRNA binding and peptide bond formation. It has been suggested to have peptidyltransferase activity; this is somewhat controversial. Makes several contacts with the 16S rRNA in the 70S ribosome. In Salmonella agona (strain SL483), this protein is Large ribosomal subunit protein uL2.